Consider the following 426-residue polypeptide: Serine--tRNA ligase (426 aa).

Residue 231–233 (TAE) participates in L-serine binding. 262–264 (RSE) provides a ligand contact to ATP. Glu-285 contacts L-serine. ATP is bound at residue 349-352 (EISS). Ser-384 lines the L-serine pocket.

This sequence belongs to the class-II aminoacyl-tRNA synthetase family. Type-1 seryl-tRNA synthetase subfamily. As to quaternary structure, homodimer. The tRNA molecule binds across the dimer.

The protein resides in the cytoplasm. The enzyme catalyses tRNA(Ser) + L-serine + ATP = L-seryl-tRNA(Ser) + AMP + diphosphate + H(+). The catalysed reaction is tRNA(Sec) + L-serine + ATP = L-seryl-tRNA(Sec) + AMP + diphosphate + H(+). It functions in the pathway aminoacyl-tRNA biosynthesis; selenocysteinyl-tRNA(Sec) biosynthesis; L-seryl-tRNA(Sec) from L-serine and tRNA(Sec): step 1/1. Catalyzes the attachment of serine to tRNA(Ser). Is also able to aminoacylate tRNA(Sec) with serine, to form the misacylated tRNA L-seryl-tRNA(Sec), which will be further converted into selenocysteinyl-tRNA(Sec). The sequence is that of Serine--tRNA ligase from Laribacter hongkongensis (strain HLHK9).